We begin with the raw amino-acid sequence, 591 residues long: V-type ATP synthase alpha chain (591 aa).

G231–T238 is an ATP binding site.

Belongs to the ATPase alpha/beta chains family.

It catalyses the reaction ATP + H2O + 4 H(+)(in) = ADP + phosphate + 5 H(+)(out). Functionally, produces ATP from ADP in the presence of a proton gradient across the membrane. The V-type alpha chain is a catalytic subunit. The sequence is that of V-type ATP synthase alpha chain from Clostridium novyi (strain NT).